The following is a 1192-amino-acid chain: Homeodomain-interacting protein kinase 3 (1192 aa).

Lys-27 participates in a covalent cross-link: Glycyl lysine isopeptide (Lys-Gly) (interchain with G-Cter in SUMO); alternate. Lys-27 is covalently cross-linked (Glycyl lysine isopeptide (Lys-Gly) (interchain with G-Cter in SUMO2); alternate). The Protein kinase domain occupies 197-525; the sequence is YEVLDFLGRG…PIETLNHPFV (329 aa). Residues 203-211 and Lys-226 contribute to the ATP site; that span reads LGRGTFGQV. The Proton acceptor role is filled by Asp-322. Position 359 is a phosphotyrosine (Tyr-359). Residues 767–921 are interaction with AR; it reads QNRSNSLQNT…NSMSDDEQES (155 aa). The interval 775–868 is interaction with FAS; that stretch reads NTNIPHSAFI…SPRPSLRECK (94 aa). The interval 799-829 is disordered; sequence CVDTQDNHTSEGEAGTCREASVRQDSSVSDK. The required for localization to nuclear speckles stretch occupies residues 832–988; the sequence is QTIIIADSPS…ESGLSVDEHM (157 aa). The interval 843–895 is SUMO interaction motifs (SIM); required for nuclear localization and kinase activity; sequence AVSVITISSDSDDEETSPRPSLRECKGSLDCEACQSTLNIDRMCSLSSPDSTL. Residues 847 to 857 form an interaction with UBL1 region; the sequence is ITISSDSDDEE. Residues 889 to 906 show a composition bias toward low complexity; sequence SSPDSTLSTSSSGQSSPS. Disordered regions lie at residues 889–943 and 956–1023; these read SSPD…PFAE and LGTC…KPAA. Lys-1185 participates in a covalent cross-link: Glycyl lysine isopeptide (Lys-Gly) (interchain with G-Cter in SUMO).

The protein belongs to the protein kinase superfamily. CMGC Ser/Thr protein kinase family. HIPK subfamily. Interacts with UBL1/SUMO-1. Interacts with and stabilizes ligand-bound androgen receptor (AR). Interacts with Nkx1-2. Interacts with FAS and DAXX. Probably part of a complex consisting of HIPK3, FAS and FADD. Binds to NR5A1/SF1, SPEN/MINT and RUNX2. In terms of processing, autophosphorylated, but autophosphorylation is not required for catalytic activity. Post-translationally, may be sumoylated. As to expression, heart, skeletal muscle, spleen, testis and lung.

It is found in the cytoplasm. It localises to the nucleus. The enzyme catalyses L-seryl-[protein] + ATP = O-phospho-L-seryl-[protein] + ADP + H(+). It catalyses the reaction L-threonyl-[protein] + ATP = O-phospho-L-threonyl-[protein] + ADP + H(+). Functionally, serine/threonine-protein kinase involved in transcription regulation, apoptosis and steroidogenic gene expression. Phosphorylates JUN and RUNX2. Seems to negatively regulate apoptosis by promoting FADD phosphorylation. Enhances androgen receptor-mediated transcription. May act as a transcriptional corepressor for NK homeodomain transcription factors. The phosphorylation of NR5A1 activates SF1 leading to increased steroidogenic gene expression upon cAMP signaling pathway stimulation. In osteoblasts, supports transcription activation: phosphorylates RUNX2 that synergizes with SPEN/MINT to enhance FGFR2-mediated activation of the osteocalcin FGF-responsive element (OCFRE). This chain is Homeodomain-interacting protein kinase 3 (Hipk3), found in Mus musculus (Mouse).